The following is a 379-amino-acid chain: Cytochrome b (379 aa).

4 consecutive transmembrane segments (helical) span residues 34–54 (FGSLLGICLITQILTGLLLAM), 78–99 (WFIRNLHANGASFFFICIYLHI), 114–134 (WNTGVILLLTLMATAFVGYVL), and 179–199 (FFALHFLLPFVIAGITLVHLT). The heme b site is built by H84 and H98. Heme b is bound by residues H183 and H197. A ubiquinone is bound at residue H202. A run of 4 helical transmembrane segments spans residues 227-247 (LKDILGFTLMFIPLLSLAFFS), 289-309 (LGGVLALAASVLILFLIPLLH), 321-341 (LSQLLFWFLVANLLILTWIGS), and 348-368 (FIIIGQVASFTYFLILLVLFP).

The protein belongs to the cytochrome b family. In terms of assembly, the cytochrome bc1 complex contains 11 subunits: 3 respiratory subunits (MT-CYB, CYC1 and UQCRFS1), 2 core proteins (UQCRC1 and UQCRC2) and 6 low-molecular weight proteins (UQCRH/QCR6, UQCRB/QCR7, UQCRQ/QCR8, UQCR10/QCR9, UQCR11/QCR10 and a cleavage product of UQCRFS1). This cytochrome bc1 complex then forms a dimer. Heme b is required as a cofactor.

The protein localises to the mitochondrion inner membrane. In terms of biological role, component of the ubiquinol-cytochrome c reductase complex (complex III or cytochrome b-c1 complex) that is part of the mitochondrial respiratory chain. The b-c1 complex mediates electron transfer from ubiquinol to cytochrome c. Contributes to the generation of a proton gradient across the mitochondrial membrane that is then used for ATP synthesis. The polypeptide is Cytochrome b (MT-CYB) (Struthio camelus (Common ostrich)).